The sequence spans 347 residues: Isopentenyl-diphosphate delta-isomerase (347 aa).

11-12 (RK) lines the substrate pocket. Residues 72–74 (AMT), Ser-102, and Asn-131 each bind FMN. Residue Gln-161 coordinates substrate. Residue Glu-162 coordinates Mg(2+). FMN-binding positions include Lys-192, Thr-222, and 287–288 (AG).

Belongs to the IPP isomerase type 2 family. As to quaternary structure, homooctamer. Dimer of tetramers. Requires FMN as cofactor. NADPH serves as cofactor. Mg(2+) is required as a cofactor.

Its subcellular location is the cytoplasm. The catalysed reaction is isopentenyl diphosphate = dimethylallyl diphosphate. In terms of biological role, involved in the biosynthesis of isoprenoids. Catalyzes the 1,3-allylic rearrangement of the homoallylic substrate isopentenyl (IPP) to its allylic isomer, dimethylallyl diphosphate (DMAPP). In Lactococcus lactis subsp. lactis (strain IL1403) (Streptococcus lactis), this protein is Isopentenyl-diphosphate delta-isomerase.